The sequence spans 346 residues: uncharacterized protein (346 aa).

This is an uncharacterized protein from Mycoplasma pneumoniae (strain ATCC 29342 / M129 / Subtype 1) (Mycoplasmoides pneumoniae).